The chain runs to 397 residues: Digeranylgeranylglycerophospholipid reductase 3 (397 aa).

FAD contacts are provided by A16, D35, C46, A47, G49, R102, A126, D283, G295, and I296. K338 is a binding site for a 2,3-bis-O-(geranylgeranyl)-sn-glycerol 1-phospholipid.

The protein belongs to the geranylgeranyl reductase family. DGGGPL reductase subfamily. FAD serves as cofactor.

The catalysed reaction is a 2,3-bis-O-phytanyl-sn-glycerol 1-phospholipid + 8 A = a 2,3-bis-O-(geranylgeranyl)-sn-glycerol 1-phospholipid + 8 AH2. It carries out the reaction 2,3-bis-O-(phytanyl)-sn-glycerol 1-phosphate + 8 A = 2,3-bis-O-(geranylgeranyl)-sn-glycerol 1-phosphate + 8 AH2. The enzyme catalyses CDP-2,3-bis-O-(geranylgeranyl)-sn-glycerol + 8 AH2 = CDP-2,3-bis-O-(phytanyl)-sn-glycerol + 8 A. It catalyses the reaction archaetidylserine + 8 AH2 = 2,3-bis-O-phytanyl-sn-glycero-3-phospho-L-serine + 8 A. The protein operates within membrane lipid metabolism; glycerophospholipid metabolism. In terms of biological role, is involved in the reduction of 2,3-digeranylgeranylglycerophospholipids (unsaturated archaeols) into 2,3-diphytanylglycerophospholipids (saturated archaeols) in the biosynthesis of archaeal membrane lipids. Catalyzes the formation of archaetidic acid (2,3-di-O-phytanyl-sn-glyceryl phosphate) from 2,3-di-O-geranylgeranylglyceryl phosphate (DGGGP) via the hydrogenation of each double bond of the isoprenoid chains. Is also probably able to reduce double bonds of geranyl groups in CDP-2,3-bis-O-(geranylgeranyl)-sn-glycerol and archaetidylserine, thus acting at various stages in the biosynthesis of archaeal membrane lipids. This is Digeranylgeranylglycerophospholipid reductase 3 from Methanosphaera stadtmanae (strain ATCC 43021 / DSM 3091 / JCM 11832 / MCB-3).